We begin with the raw amino-acid sequence, 343 residues long: 3-dehydroquinate synthase (343 aa).

Residues 86-90 (GALLD), 110-111 (TT), K123, and K132 contribute to the NAD(+) site. 3 residues coordinate Zn(2+): E165, H229, and H243.

Belongs to the sugar phosphate cyclases superfamily. Dehydroquinate synthase family. Co(2+) is required as a cofactor. Zn(2+) serves as cofactor. It depends on NAD(+) as a cofactor.

It is found in the cytoplasm. It catalyses the reaction 7-phospho-2-dehydro-3-deoxy-D-arabino-heptonate = 3-dehydroquinate + phosphate. It participates in metabolic intermediate biosynthesis; chorismate biosynthesis; chorismate from D-erythrose 4-phosphate and phosphoenolpyruvate: step 2/7. Its function is as follows. Catalyzes the conversion of 3-deoxy-D-arabino-heptulosonate 7-phosphate (DAHP) to dehydroquinate (DHQ). The chain is 3-dehydroquinate synthase from Pyrobaculum neutrophilum (strain DSM 2338 / JCM 9278 / NBRC 100436 / V24Sta) (Thermoproteus neutrophilus).